Reading from the N-terminus, the 194-residue chain is Large ribosomal subunit protein eL15 (194 aa).

The disordered stretch occupies residues 168 to 194 (RSRGLLNKGKGAEKVRPSIRAHQGKGK). Residues 184–194 (PSIRAHQGKGK) are compositionally biased toward basic residues.

Belongs to the eukaryotic ribosomal protein eL15 family. In terms of assembly, part of the 50S ribosomal subunit.

The polypeptide is Large ribosomal subunit protein eL15 (Thermococcus kodakarensis (strain ATCC BAA-918 / JCM 12380 / KOD1) (Pyrococcus kodakaraensis (strain KOD1))).